A 186-amino-acid chain; its full sequence is Signal peptidase I P (186 aa).

At 1–15 (MTKEKVFKKKSSILE) the chain is on the cytoplasmic side. A helical transmembrane segment spans residues 16 to 35 (WGKAIVIAVILALLIRNFLF). The Extracellular segment spans residues 36–186 (EPYVVEGKSM…FPFSNMRKAK (151 aa)). Residues Ser-44 and Lys-86 contribute to the active site.

Belongs to the peptidase S26 family.

The protein localises to the cell membrane. The enzyme catalyses Cleavage of hydrophobic, N-terminal signal or leader sequences from secreted and periplasmic proteins.. This chain is Signal peptidase I P (sipP), found in Bacillus subtilis subsp. natto.